Here is a 148-residue protein sequence, read N- to C-terminus: D-aminoacyl-tRNA deacylase (148 aa).

The Gly-cisPro motif, important for rejection of L-amino acids signature appears at 137–138 (GP).

Belongs to the DTD family. Homodimer.

It is found in the cytoplasm. The catalysed reaction is glycyl-tRNA(Ala) + H2O = tRNA(Ala) + glycine + H(+). The enzyme catalyses a D-aminoacyl-tRNA + H2O = a tRNA + a D-alpha-amino acid + H(+). An aminoacyl-tRNA editing enzyme that deacylates mischarged D-aminoacyl-tRNAs. Also deacylates mischarged glycyl-tRNA(Ala), protecting cells against glycine mischarging by AlaRS. Acts via tRNA-based rather than protein-based catalysis; rejects L-amino acids rather than detecting D-amino acids in the active site. By recycling D-aminoacyl-tRNA to D-amino acids and free tRNA molecules, this enzyme counteracts the toxicity associated with the formation of D-aminoacyl-tRNA entities in vivo and helps enforce protein L-homochirality. In Oenococcus oeni (strain ATCC BAA-331 / PSU-1), this protein is D-aminoacyl-tRNA deacylase.